The chain runs to 1083 residues: DNA primase (1083 aa).

The segment at 1022–1061 (CLRYPHRGGRTAPRTFVSLRVDHHNRLCISLAQQCFATKC) adopts a CHC2-type zinc-finger fold.

It belongs to the herpesviridae DNA primase family. Associates with the helicase and the primase-associated factor to form the helicase-primase factor.

It is found in the host nucleus. Its function is as follows. Essential component of the helicase/primase complex. Unwinds the DNA at the replication forks and generates single-stranded DNA for both leading and lagging strand synthesis. The primase initiates primer synthesis and thereby produces large amount of short RNA primers on the lagging strand that the polymerase elongates using dNTPs. The polypeptide is DNA primase (Varicella-zoster virus (strain Oka vaccine) (HHV-3)).